The chain runs to 1011 residues: Probable calcium-transporting ATPase (1011 aa).

Over 1–65 the chain is Cytoplasmic; the sequence is MLPENLPTDP…WKLVLAQFED (65 aa). The chain crosses the membrane as a helical span at residues 66-84; the sequence is TLVRILLLAATVSFAMAVV. Topologically, residues 85–90 are extracellular; that stretch reads ENNAAD. Residues 91–110 form a helical membrane-spanning segment; the sequence is FVEPFIILLILILNATVGVW. Topologically, residues 111–258 are cytoplasmic; it reads QENRAEGAIE…QVKLDEFGVL (148 aa). The helical transmembrane segment at 259-278 threads the bilayer; sequence LSKVIGYICLVVFAVNLVRW. Topologically, residues 279-303 are extracellular; it reads YATHKPTKNETFFTRYIQPSVHCLK. The helical transmembrane segment at 304–321 threads the bilayer; that stretch reads VAVALAVAAIPEGLPAVV. Over 322-770 the chain is Cytoplasmic; that stretch reads TTCLALGTRR…RYLISSNIGE (449 aa). Residue D357 is the 4-aspartylphosphate intermediate of the active site. K514 lines the ATP pocket. A helical transmembrane segment spans residues 771–794; that stretch reads VVCILVTGLFGLPEALSPVQLLWV. At 795 to 835 the chain is on the extracellular side; it reads NLVTDGLPATALGFNAPDRDIMEQRPRRMEEPIVNGWLFMR. A helical transmembrane segment spans residues 836-856; the sequence is YMVIGVYVGLATVGGFLWWFL. The Cytoplasmic portion of the chain corresponds to 857–885; it reads RHGFSWHDLTTYTACSDMTNGTCLLLANP. The chain crosses the membrane as a helical span at residues 886–905; it reads QTARAIALSILVVVEMLNAL. Residues 906-922 lie on the Extracellular side of the membrane; it reads NALSENASLIVSRPSSN. A helical transmembrane segment spans residues 923-942; sequence VWLLFAIFSSLSLHLIIMYV. Over 943–1011 the chain is Cytoplasmic; sequence PFFAKLFNIV…MEKAQEKKKD (69 aa).

The protein belongs to the cation transport ATPase (P-type) (TC 3.A.3) family.

It localises to the flagellar pocket. The protein resides in the cell membrane. It carries out the reaction Ca(2+)(in) + ATP + H2O = Ca(2+)(out) + ADP + phosphate + H(+). Its function is as follows. This magnesium-dependent enzyme catalyzes the hydrolysis of ATP coupled with the transport of the calcium. This is Probable calcium-transporting ATPase (TBA1) from Trypanosoma brucei brucei.